Here is an 879-residue protein sequence, read N- to C-terminus: Prostaglandin F2 receptor negative regulator (879 aa).

An N-terminal signal peptide occupies residues 1 to 25 (MGRLASRPLLLALLSLALCRGRVVR). Ig-like C2-type domains follow at residues 26–129 (VPTA…ATVQ) and 149–268 (PSAR…KAVE). Residues 26–832 (VPTATLVRVV…MDVLNAFKYP (807 aa)) lie on the Extracellular side of the membrane. 2 disulfide bridges follow: Cys43-Cys119 and Cys169-Cys247. Asn44 carries an N-linked (GlcNAc...) asparagine glycan. Residue Thr271 is modified to Phosphothreonine. Ig-like C2-type domains follow at residues 276 to 394 (PSVL…EAVS), 406 to 536 (PDYQ…DVFS), 544 to 662 (ALED…AWSP), and 688 to 813 (PIFN…AEIH). Asn286, Asn300, Asn383, and Asn413 each carry an N-linked (GlcNAc...) asparagine glycan. A disulfide bridge connects residues Cys299 and Cys373. The Endoplasmic reticulum retention signal motif lies at 424 to 427 (PTEL). The cysteines at positions 429 and 515 are disulfide-linked. N-linked (GlcNAc...) asparagine glycosylation is found at Asn525, Asn600, Asn618, and Asn691. Cysteines 571 and 655 form a disulfide. Positions 703–705 (RGD) match the Cell attachment site motif. Cys711 and Cys793 form a disulfide bridge. Residues 833–853 (LLIGVGLSTVIGLLSCLIGYC) form a helical membrane-spanning segment. The Cytoplasmic portion of the chain corresponds to 854-879 (SSHWCCKKEVQETRRERRRLMSMEMD).

In terms of assembly, interacts with CD9 and CD81. Part of a complex composed of CD9, CD81 and IGSF8. Also seems to interact with CD63, CD82 and CD151.

It localises to the endoplasmic reticulum membrane. It is found in the golgi apparatus. The protein resides in the trans-Golgi network membrane. Inhibits the binding of prostaglandin F2-alpha (PGF2-alpha) to its specific FP receptor, by decreasing the receptor number rather than the affinity constant. Functional coupling with the prostaglandin F2-alpha receptor seems to occur. In myoblasts, associates with tetraspanins CD9 and CD81 to prevent myotube fusion during muscle regeneration. The sequence is that of Prostaglandin F2 receptor negative regulator (PTGFRN) from Homo sapiens (Human).